The primary structure comprises 346 residues: N-acetyl-gamma-glutamyl-phosphate reductase (346 aa).

Residue C150 is part of the active site.

It belongs to the NAGSA dehydrogenase family. Type 1 subfamily.

It is found in the cytoplasm. It catalyses the reaction N-acetyl-L-glutamate 5-semialdehyde + phosphate + NADP(+) = N-acetyl-L-glutamyl 5-phosphate + NADPH + H(+). Its pathway is amino-acid biosynthesis; L-arginine biosynthesis; N(2)-acetyl-L-ornithine from L-glutamate: step 3/4. Functionally, catalyzes the NADPH-dependent reduction of N-acetyl-5-glutamyl phosphate to yield N-acetyl-L-glutamate 5-semialdehyde. The protein is N-acetyl-gamma-glutamyl-phosphate reductase of Brevibacillus brevis (strain 47 / JCM 6285 / NBRC 100599).